The chain runs to 549 residues: CTP synthase (549 aa).

The interval 1–266 is amidoligase domain; that stretch reads MSAKYIFVTG…DKLALRYLHL (266 aa). Serine 14 provides a ligand contact to CTP. Serine 14 is a UTP binding site. ATP contacts are provided by residues 15–20 and aspartate 72; that span reads SLGKGL. 2 residues coordinate Mg(2+): aspartate 72 and glutamate 140. Residues 147–149, 187–192, and lysine 223 each bind CTP; these read DIE and KTKPTQ. UTP is bound by residues 187 to 192 and lysine 223; that span reads KTKPTQ. 239 to 241 contacts ATP; the sequence is KDV. In terms of domain architecture, Glutamine amidotransferase type-1 spans 291-533; the sequence is SIGIVGKYVE…VKAAYQNHKP (243 aa). L-glutamine is bound at residue glycine 353. The Nucleophile; for glutamine hydrolysis role is filled by cysteine 380. L-glutamine-binding positions include 381-384, glutamate 404, and arginine 461; that span reads LGMQ. Active-site residues include histidine 506 and glutamate 508.

Belongs to the CTP synthase family. Homotetramer.

The enzyme catalyses UTP + L-glutamine + ATP + H2O = CTP + L-glutamate + ADP + phosphate + 2 H(+). The catalysed reaction is L-glutamine + H2O = L-glutamate + NH4(+). It catalyses the reaction UTP + NH4(+) + ATP = CTP + ADP + phosphate + 2 H(+). The protein operates within pyrimidine metabolism; CTP biosynthesis via de novo pathway; CTP from UDP: step 2/2. Its activity is regulated as follows. Allosterically activated by GTP, when glutamine is the substrate; GTP has no effect on the reaction when ammonia is the substrate. The allosteric effector GTP functions by stabilizing the protein conformation that binds the tetrahedral intermediate(s) formed during glutamine hydrolysis. Inhibited by the product CTP, via allosteric rather than competitive inhibition. Functionally, catalyzes the ATP-dependent amination of UTP to CTP with either L-glutamine or ammonia as the source of nitrogen. Regulates intracellular CTP levels through interactions with the four ribonucleotide triphosphates. This chain is CTP synthase, found in Acidobacterium capsulatum (strain ATCC 51196 / DSM 11244 / BCRC 80197 / JCM 7670 / NBRC 15755 / NCIMB 13165 / 161).